The following is a 339-amino-acid chain: Glycerol-3-phosphate dehydrogenase [NAD(P)+] (339 aa).

Positions 15, 16, 36, and 110 each coordinate NADPH. Residues lysine 110, glycine 139, and threonine 141 each coordinate sn-glycerol 3-phosphate. Alanine 143 serves as a coordination point for NADPH. Sn-glycerol 3-phosphate contacts are provided by lysine 195, aspartate 248, serine 258, arginine 259, and asparagine 260. The active-site Proton acceptor is the lysine 195. Arginine 259 contributes to the NADPH binding site. Positions 283 and 285 each coordinate NADPH.

The protein belongs to the NAD-dependent glycerol-3-phosphate dehydrogenase family.

Its subcellular location is the cytoplasm. It catalyses the reaction sn-glycerol 3-phosphate + NAD(+) = dihydroxyacetone phosphate + NADH + H(+). The enzyme catalyses sn-glycerol 3-phosphate + NADP(+) = dihydroxyacetone phosphate + NADPH + H(+). It functions in the pathway membrane lipid metabolism; glycerophospholipid metabolism. Its function is as follows. Catalyzes the reduction of the glycolytic intermediate dihydroxyacetone phosphate (DHAP) to sn-glycerol 3-phosphate (G3P), the key precursor for phospholipid synthesis. The sequence is that of Glycerol-3-phosphate dehydrogenase [NAD(P)+] from Escherichia coli O17:K52:H18 (strain UMN026 / ExPEC).